The following is a 158-amino-acid chain: UPF0225 protein Pfl01_1218 (158 aa).

The protein belongs to the UPF0225 family.

The sequence is that of UPF0225 protein Pfl01_1218 from Pseudomonas fluorescens (strain Pf0-1).